Here is a 156-residue protein sequence, read N- to C-terminus: SsrA-binding protein (156 aa).

The interval 130–156 is disordered; it reads KFDKRDDLKKKDAKRDIDRALRDKQKY. The span at 132–156 shows a compositional bias: basic and acidic residues; that stretch reads DKRDDLKKKDAKRDIDRALRDKQKY.

This sequence belongs to the SmpB family.

The protein resides in the cytoplasm. In terms of biological role, required for rescue of stalled ribosomes mediated by trans-translation. Binds to transfer-messenger RNA (tmRNA), required for stable association of tmRNA with ribosomes. tmRNA and SmpB together mimic tRNA shape, replacing the anticodon stem-loop with SmpB. tmRNA is encoded by the ssrA gene; the 2 termini fold to resemble tRNA(Ala) and it encodes a 'tag peptide', a short internal open reading frame. During trans-translation Ala-aminoacylated tmRNA acts like a tRNA, entering the A-site of stalled ribosomes, displacing the stalled mRNA. The ribosome then switches to translate the ORF on the tmRNA; the nascent peptide is terminated with the 'tag peptide' encoded by the tmRNA and targeted for degradation. The ribosome is freed to recommence translation, which seems to be the essential function of trans-translation. The sequence is that of SsrA-binding protein from Exiguobacterium sibiricum (strain DSM 17290 / CCUG 55495 / CIP 109462 / JCM 13490 / 255-15).